We begin with the raw amino-acid sequence, 397 residues long: S-adenosylmethionine synthase (397 aa).

H15 is a binding site for ATP. D17 is a binding site for Mg(2+). E43 serves as a coordination point for K(+). 2 residues coordinate L-methionine: E56 and Q99. Positions 99 to 109 (QSPDIAQGVTA) are flexible loop. ATP contacts are provided by residues 173 to 175 (DGK), 242 to 243 (KF), D251, 257 to 258 (RK), A274, and K278. D251 contributes to the L-methionine binding site. K282 provides a ligand contact to L-methionine.

Belongs to the AdoMet synthase family. Homotetramer; dimer of dimers. Requires Mg(2+) as cofactor. It depends on K(+) as a cofactor.

The protein resides in the cytoplasm. It carries out the reaction L-methionine + ATP + H2O = S-adenosyl-L-methionine + phosphate + diphosphate. Its pathway is amino-acid biosynthesis; S-adenosyl-L-methionine biosynthesis; S-adenosyl-L-methionine from L-methionine: step 1/1. In terms of biological role, catalyzes the formation of S-adenosylmethionine (AdoMet) from methionine and ATP. The overall synthetic reaction is composed of two sequential steps, AdoMet formation and the subsequent tripolyphosphate hydrolysis which occurs prior to release of AdoMet from the enzyme. This Cutibacterium acnes (strain DSM 16379 / KPA171202) (Propionibacterium acnes) protein is S-adenosylmethionine synthase.